A 248-amino-acid polypeptide reads, in one-letter code: UPF0736 protein BCB4264_A1231 (248 aa).

This sequence belongs to the UPF0736 family.

This Bacillus cereus (strain B4264) protein is UPF0736 protein BCB4264_A1231.